The primary structure comprises 261 residues: ATP synthase subunit a (261 aa).

7 consecutive transmembrane segments (helical) span residues 31–51 (IAFT…LIFM), 64–84 (WQAA…TNIG), 97–117 (LFMF…VVGV), 126–146 (LTVT…VGFW), 166–188 (IPMI…GLRL), 201–223 (VLAG…VSIP), and 235–255 (ELLV…LYLN).

This sequence belongs to the ATPase A chain family. In terms of assembly, F-type ATPases have 2 components, CF(1) - the catalytic core - and CF(0) - the membrane proton channel. CF(1) has five subunits: alpha(3), beta(3), gamma(1), delta(1), epsilon(1). CF(0) has three main subunits: a(1), b(2) and c(9-12). The alpha and beta chains form an alternating ring which encloses part of the gamma chain. CF(1) is attached to CF(0) by a central stalk formed by the gamma and epsilon chains, while a peripheral stalk is formed by the delta and b chains.

It is found in the cell inner membrane. Functionally, key component of the proton channel; it plays a direct role in the translocation of protons across the membrane. The chain is ATP synthase subunit a from Rhizorhabdus wittichii (strain DSM 6014 / CCUG 31198 / JCM 15750 / NBRC 105917 / EY 4224 / RW1) (Sphingomonas wittichii).